Consider the following 288-residue polypeptide: Acetyl-coenzyme A carboxylase carboxyl transferase subunit beta (288 aa).

The region spanning 30–288 (IMTKCPKCKK…KLHQEVKKDA (259 aa)) is the CoA carboxyltransferase N-terminal domain. 4 residues coordinate Zn(2+): cysteine 34, cysteine 37, cysteine 53, and cysteine 56. The C4-type zinc-finger motif lies at 34 to 56 (CPKCKKIMYTKELNENLNVCFNC).

Belongs to the AccD/PCCB family. As to quaternary structure, acetyl-CoA carboxylase is a heterohexamer composed of biotin carboxyl carrier protein (AccB), biotin carboxylase (AccC) and two subunits each of ACCase subunit alpha (AccA) and ACCase subunit beta (AccD). Zn(2+) is required as a cofactor.

It localises to the cytoplasm. It catalyses the reaction N(6)-carboxybiotinyl-L-lysyl-[protein] + acetyl-CoA = N(6)-biotinyl-L-lysyl-[protein] + malonyl-CoA. The protein operates within lipid metabolism; malonyl-CoA biosynthesis; malonyl-CoA from acetyl-CoA: step 1/1. Functionally, component of the acetyl coenzyme A carboxylase (ACC) complex. Biotin carboxylase (BC) catalyzes the carboxylation of biotin on its carrier protein (BCCP) and then the CO(2) group is transferred by the transcarboxylase to acetyl-CoA to form malonyl-CoA. This is Acetyl-coenzyme A carboxylase carboxyl transferase subunit beta from Staphylococcus haemolyticus (strain JCSC1435).